A 571-amino-acid polypeptide reads, in one-letter code: MSNFFKKLVKKDGTPKSSRKSKSESPVGKYDMNGNQVVPDTASSYSDDSNSLSDSYDKRGEPNIGEQIDTLDDYNFGNEIGDAESAPEDKKSLWKKVGGLVGKDPMSLVSLPVYFFEPLTVLECQLEPLRFVELIEKASTCSDSIDRLMYLTAFNIAVFSSYTRTAKPFNPLLGETFEYIDKQGRYKSFCEQVSHHPPIGIAQTTSEIFDLQQESWITTKFWGNSLDVFSHGQNHLYLNSTGEHFTWKVPSAICHNIIFGKMWIEHYGDLIVENHNTGEKAIINFQKSGWFEGTQRKVQGEILDSKGNARVHINGKWDKYVKAKKHSEGPSRKSSGEITLWEATIEPPENFNKWKHGKWIQGLNEMSKEYQAVLPSTDSRVRMDRIYLEREENKLANKEKNKIEEREREKRKTRESRKEIWKPNYFSKREDSKYGYRWDFNGKYWDERDKRVDSVVDKFKNDPNFDSNKIPEYDDSKLNISVKSVRKFSRDFTNSSTPTQLKRSFSKLKLEEQPQSQSLPPMIKEELSSSTVDHEETFYSESNEAKLESIKEDANSHTYIYSSPTIGHSGR.

The interval 1–73 (MSNFFKKLVK…IGEQIDTLDD (73 aa)) is disordered. Positions 33 to 42 (NGNQVVPDTA) are enriched in polar residues. A compositionally biased stretch (low complexity) spans 43–54 (SSYSDDSNSLSD). Residues 387 to 420 (YLEREENKLANKEKNKIEEREREKRKTRESRKEI) are a coiled coil.

It belongs to the OSBP family.

The chain is Oxysterol-binding protein 11 (osbK) from Dictyostelium discoideum (Social amoeba).